The chain runs to 398 residues: Bifunctional enzyme IspD/IspF (398 aa).

Residues 1 to 234 (MSNSKRTAAI…SRLGALLGDI (234 aa)) form a 2-C-methyl-D-erythritol 4-phosphate cytidylyltransferase region. The segment at 235 to 398 (RTGTGYDVHA…LPWGTNGLAD (164 aa)) is 2-C-methyl-D-erythritol 2,4-cyclodiphosphate synthase. The a divalent metal cation site is built by Asp241 and His243. 4-CDP-2-C-methyl-D-erythritol 2-phosphate-binding positions include 241–243 (DVH) and 267–268 (HS). His275 lines the a divalent metal cation pocket. 4-CDP-2-C-methyl-D-erythritol 2-phosphate-binding positions include 289 to 291 (DIG), 365 to 368 (TTSE), Phe372, and Arg375.

It in the N-terminal section; belongs to the IspD/TarI cytidylyltransferase family. IspD subfamily. In the C-terminal section; belongs to the IspF family. The cofactor is a divalent metal cation.

It carries out the reaction 2-C-methyl-D-erythritol 4-phosphate + CTP + H(+) = 4-CDP-2-C-methyl-D-erythritol + diphosphate. The enzyme catalyses 4-CDP-2-C-methyl-D-erythritol 2-phosphate = 2-C-methyl-D-erythritol 2,4-cyclic diphosphate + CMP. Its pathway is isoprenoid biosynthesis; isopentenyl diphosphate biosynthesis via DXP pathway; isopentenyl diphosphate from 1-deoxy-D-xylulose 5-phosphate: step 2/6. It participates in isoprenoid biosynthesis; isopentenyl diphosphate biosynthesis via DXP pathway; isopentenyl diphosphate from 1-deoxy-D-xylulose 5-phosphate: step 4/6. Functionally, bifunctional enzyme that catalyzes the formation of 4-diphosphocytidyl-2-C-methyl-D-erythritol from CTP and 2-C-methyl-D-erythritol 4-phosphate (MEP) (IspD), and catalyzes the conversion of 4-diphosphocytidyl-2-C-methyl-D-erythritol 2-phosphate (CDP-ME2P) to 2-C-methyl-D-erythritol 2,4-cyclodiphosphate (ME-CPP) with a corresponding release of cytidine 5-monophosphate (CMP) (IspF). This chain is Bifunctional enzyme IspD/IspF, found in Rhodopseudomonas palustris (strain BisB18).